The sequence spans 274 residues: Formamidopyrimidine-DNA glycosylase (274 aa).

P2 acts as the Schiff-base intermediate with DNA in catalysis. Residue E3 is the Proton donor of the active site. Catalysis depends on K58, which acts as the Proton donor; for beta-elimination activity. Residues H92 and R111 each coordinate DNA. The FPG-type; degenerate zinc finger occupies 239–273 (HVYGREGEPCERCGTIIEKIKVAQRGTHFCPLEQR). The active-site Proton donor; for delta-elimination activity is R263.

It belongs to the FPG family. Monomer. Zn(2+) serves as cofactor.

The enzyme catalyses Hydrolysis of DNA containing ring-opened 7-methylguanine residues, releasing 2,6-diamino-4-hydroxy-5-(N-methyl)formamidopyrimidine.. The catalysed reaction is 2'-deoxyribonucleotide-(2'-deoxyribose 5'-phosphate)-2'-deoxyribonucleotide-DNA = a 3'-end 2'-deoxyribonucleotide-(2,3-dehydro-2,3-deoxyribose 5'-phosphate)-DNA + a 5'-end 5'-phospho-2'-deoxyribonucleoside-DNA + H(+). Involved in base excision repair of DNA damaged by oxidation or by mutagenic agents. Acts as a DNA glycosylase that recognizes and removes damaged bases. Has a preference for oxidized purines, such as 7,8-dihydro-8-oxoguanine (8-oxoG). Has AP (apurinic/apyrimidinic) lyase activity and introduces nicks in the DNA strand. Cleaves the DNA backbone by beta-delta elimination to generate a single-strand break at the site of the removed base with both 3'- and 5'-phosphates. The sequence is that of Formamidopyrimidine-DNA glycosylase from Lactiplantibacillus plantarum (strain ATCC BAA-793 / NCIMB 8826 / WCFS1) (Lactobacillus plantarum).